We begin with the raw amino-acid sequence, 130 residues long: Large ribosomal subunit protein bL17 (130 aa).

It belongs to the bacterial ribosomal protein bL17 family. As to quaternary structure, part of the 50S ribosomal subunit. Contacts protein L32.

This chain is Large ribosomal subunit protein bL17, found in Buchnera aphidicola subsp. Acyrthosiphon pisum (strain 5A).